The sequence spans 143 residues: Transcription antitermination protein NusB (143 aa).

The protein belongs to the NusB family.

In terms of biological role, involved in transcription antitermination. Required for transcription of ribosomal RNA (rRNA) genes. Binds specifically to the boxA antiterminator sequence of the ribosomal RNA (rrn) operons. The sequence is that of Transcription antitermination protein NusB from Mannheimia succiniciproducens (strain KCTC 0769BP / MBEL55E).